The sequence spans 663 residues: UvrABC system protein B (663 aa).

A compositionally biased stretch (basic and acidic residues) spans 1–10 (MIDKRDDKPF). A disordered region spans residues 1 to 23 (MIDKRDDKPFKLKSKYKPSGDQP). Positions 31–418 (DNIEGGEKAQ…TNTIIEQIIR (388 aa)) constitute a Helicase ATP-binding domain. 44–51 (GATGTGKT) contacts ATP. The Beta-hairpin signature appears at 97 to 120 (YYDYYQPEAYVPSSDTYIEKDSSV). A Helicase C-terminal domain is found at 435 to 601 (QMDDLLGEIN…TIKKDIRGLI (167 aa)). The UVR domain occupies 627–662 (KEAINALQKQMQEAAELLDFELAAQMRDLILELKLM).

This sequence belongs to the UvrB family. Forms a heterotetramer with UvrA during the search for lesions. Interacts with UvrC in an incision complex.

The protein localises to the cytoplasm. Functionally, the UvrABC repair system catalyzes the recognition and processing of DNA lesions. A damage recognition complex composed of 2 UvrA and 2 UvrB subunits scans DNA for abnormalities. Upon binding of the UvrA(2)B(2) complex to a putative damaged site, the DNA wraps around one UvrB monomer. DNA wrap is dependent on ATP binding by UvrB and probably causes local melting of the DNA helix, facilitating insertion of UvrB beta-hairpin between the DNA strands. Then UvrB probes one DNA strand for the presence of a lesion. If a lesion is found the UvrA subunits dissociate and the UvrB-DNA preincision complex is formed. This complex is subsequently bound by UvrC and the second UvrB is released. If no lesion is found, the DNA wraps around the other UvrB subunit that will check the other stand for damage. The polypeptide is UvrABC system protein B (Streptococcus pyogenes serotype M6 (strain ATCC BAA-946 / MGAS10394)).